The primary structure comprises 260 residues: RxLR effector protein BLR38 (260 aa).

Positions 1–18 (MHCTVFFLLIACAKSSYG) are cleaved as a signal peptide. The RxLR motif lies at 46–49 (RLLR). The Nuclear localuization signal (NLS) motif lies at 136–148 (MPSSRKRPRALDE).

This sequence belongs to the RxLR effector family.

Its subcellular location is the secreted. The protein resides in the host nucleus. In terms of biological role, secreted effector that triggers a robust hypersensitive response (HR) in Lactuca serriola LS102. The response to BLN06 was visible as strong necrosis. Although effector recognition is frequently associated with single dominant R gene loci, the recognition of BLR38 requires 2 unlinked loci that display incomplete dominance. The protein is RxLR effector protein BLR38 of Bremia lactucae (Lettuce downy mildew).